The chain runs to 131 residues: Profilin-5 (131 aa).

C13 and C115 are disulfide-bonded. Residues A81 to T97 carry the Involved in PIP2 interaction motif. Position 111 is a phosphothreonine (T111).

It belongs to the profilin family. In terms of assembly, occurs in many kinds of cells as a complex with monomeric actin in a 1:1 ratio. In terms of processing, phosphorylated by MAP kinases.

Its subcellular location is the cytoplasm. It is found in the cytoskeleton. In terms of biological role, binds to actin and affects the structure of the cytoskeleton. At high concentrations, profilin prevents the polymerization of actin, whereas it enhances it at low concentrations. This chain is Profilin-5, found in Olea europaea (Common olive).